We begin with the raw amino-acid sequence, 505 residues long: 2,3-bisphosphoglycerate-independent phosphoglycerate mutase (505 aa).

Mn(2+) is bound by residues aspartate 13 and serine 63. Catalysis depends on serine 63, which acts as the Phosphoserine intermediate. Residues histidine 124, 153-154 (RD), arginine 183, arginine 189, 254-257 (RADR), and lysine 330 contribute to the substrate site. The Mn(2+) site is built by aspartate 396, histidine 400, aspartate 437, histidine 438, and histidine 456.

The protein belongs to the BPG-independent phosphoglycerate mutase family. As to quaternary structure, monomer. Mn(2+) is required as a cofactor.

It carries out the reaction (2R)-2-phosphoglycerate = (2R)-3-phosphoglycerate. It functions in the pathway carbohydrate degradation; glycolysis; pyruvate from D-glyceraldehyde 3-phosphate: step 3/5. Functionally, catalyzes the interconversion of 2-phosphoglycerate and 3-phosphoglycerate. The protein is 2,3-bisphosphoglycerate-independent phosphoglycerate mutase of Roseobacter denitrificans (strain ATCC 33942 / OCh 114) (Erythrobacter sp. (strain OCh 114)).